Consider the following 622-residue polypeptide: uncharacterized protein (622 aa).

An N-terminal signal peptide occupies residues 1 to 20; it reads MKIKAVAIFLSLLMIISLFS.

This is an uncharacterized protein from Methanocaldococcus jannaschii (strain ATCC 43067 / DSM 2661 / JAL-1 / JCM 10045 / NBRC 100440) (Methanococcus jannaschii).